The primary structure comprises 449 residues: Xylose isomerase (449 aa).

Catalysis depends on residues H103 and D106. E234, E270, H273, D298, D309, D311, and D342 together coordinate Mg(2+).

The protein belongs to the xylose isomerase family. In terms of assembly, homotetramer. Mg(2+) serves as cofactor.

The protein resides in the cytoplasm. It catalyses the reaction alpha-D-xylose = alpha-D-xylulofuranose. The chain is Xylose isomerase from Levilactobacillus brevis (Lactobacillus brevis).